A 341-amino-acid chain; its full sequence is Casein kinase I isoform alpha (341 aa).

The region spanning 16-284 (YKLIRKIGSG…YLRQLFRILF (269 aa)) is the Protein kinase domain. Residues 22–30 (IGSGSFGDI) and K45 contribute to the ATP site. The active-site Proton acceptor is the D135. Over residues 306-320 (QSQSSGVPGTNTTTQ) the composition is skewed to polar residues. The interval 306 to 341 (QSQSSGVPGTNTTTQGATVPSAGVPAGVAPGGTTPQ) is disordered. The span at 321 to 341 (GATVPSAGVPAGVAPGGTTPQ) shows a compositional bias: low complexity.

Belongs to the protein kinase superfamily. CK1 Ser/Thr protein kinase family. Casein kinase I subfamily.

It carries out the reaction L-seryl-[protein] + ATP = O-phospho-L-seryl-[protein] + ADP + H(+). The catalysed reaction is L-threonyl-[protein] + ATP = O-phospho-L-threonyl-[protein] + ADP + H(+). The protein is Casein kinase I isoform alpha (kin-19) of Caenorhabditis elegans.